The following is a 194-amino-acid chain: Translation machinery-associated protein 22 (194 aa).

One can recognise an SUI1 domain in the interval 102–173 (VQIKRVERNK…DVQDWLLEVY (72 aa)).

Belongs to the DENR family. As to quaternary structure, interacts with the 40S ribosomal subunit.

It localises to the cytoplasm. This Aspergillus oryzae (strain ATCC 42149 / RIB 40) (Yellow koji mold) protein is Translation machinery-associated protein 22 (tma22).